A 158-amino-acid polypeptide reads, in one-letter code: 2-C-methyl-D-erythritol 2,4-cyclodiphosphate synthase (158 aa).

2 residues coordinate a divalent metal cation: D8 and H10. 4-CDP-2-C-methyl-D-erythritol 2-phosphate is bound by residues 8-10 (DAH) and 34-35 (HS). Position 42 (H42) interacts with a divalent metal cation. 4-CDP-2-C-methyl-D-erythritol 2-phosphate contacts are provided by residues 56–58 (DIG), 132–135 (TTTE), and R142.

The protein belongs to the IspF family. In terms of assembly, homotrimer. Requires a divalent metal cation as cofactor.

The catalysed reaction is 4-CDP-2-C-methyl-D-erythritol 2-phosphate = 2-C-methyl-D-erythritol 2,4-cyclic diphosphate + CMP. It participates in isoprenoid biosynthesis; isopentenyl diphosphate biosynthesis via DXP pathway; isopentenyl diphosphate from 1-deoxy-D-xylulose 5-phosphate: step 4/6. In terms of biological role, involved in the biosynthesis of isopentenyl diphosphate (IPP) and dimethylallyl diphosphate (DMAPP), two major building blocks of isoprenoid compounds. Catalyzes the conversion of 4-diphosphocytidyl-2-C-methyl-D-erythritol 2-phosphate (CDP-ME2P) to 2-C-methyl-D-erythritol 2,4-cyclodiphosphate (ME-CPP) with a corresponding release of cytidine 5-monophosphate (CMP). This Nitrosococcus oceani (strain ATCC 19707 / BCRC 17464 / JCM 30415 / NCIMB 11848 / C-107) protein is 2-C-methyl-D-erythritol 2,4-cyclodiphosphate synthase.